Consider the following 328-residue polypeptide: E3 ubiquitin-protein ligase RING1-like (328 aa).

N-acetylserine is present on serine 2. The RING-type; atypical zinc-finger motif lies at 216–257 (CAVCMDEFEDGSDVKQMPCKHVFHQDCLLPWLELHNSCPVCR). Positions 264 to 328 (DPDYENRSQG…NLETRGEDLD (65 aa)) are disordered. Gly residues predominate over residues 306-319 (SGSGSGAPGTGGGN).

Post-translationally, auto-ubiquitinated as part of the enzymatic reaction. In terms of tissue distribution, expressed in leaves, roots, trichomes, stipules, and also in anthers and stigma of flowers.

The enzyme catalyses S-ubiquitinyl-[E2 ubiquitin-conjugating enzyme]-L-cysteine + [acceptor protein]-L-lysine = [E2 ubiquitin-conjugating enzyme]-L-cysteine + N(6)-ubiquitinyl-[acceptor protein]-L-lysine.. The protein operates within protein modification; protein ubiquitination. In terms of biological role, E3 ubiquitin-protein ligase which accepts ubiquitin from an E2 ubiquitin-conjugating enzyme in the form of a thioester and then directly transfers the ubiquitin to targeted substrates. Promotes polyubiquitination of target proteins. The sequence is that of E3 ubiquitin-protein ligase RING1-like from Arabidopsis thaliana (Mouse-ear cress).